Consider the following 200-residue polypeptide: MSFVTENPWLMVLTIFIINVCYVTFLTMRTILTLKGYRYIAASVSFLEVLVYIVGLGLVMSNLDHIQNIIAYAFGFSIGIIVGMKIEEKLALGYTVVNVTSAEYELDLPNELRNLGYGVTHYAAFGRDGSRMVMQILTPRKYERKLMDTIKNLDPKAFIIAYEPRNIHGGFWTKGIRRRKLKDYEPEELESVVEHEIQSK.

The next 3 membrane-spanning stretches (helical) occupy residues 8 to 28, 40 to 60, and 66 to 86; these read PWLMVLTIFIINVCYVTFLTM, IAASVSFLEVLVYIVGLGLVM, and IQNIIAYAFGFSIGIIVGMKI.

This sequence belongs to the UPF0316 family.

Its subcellular location is the cell membrane. This Staphylococcus aureus (strain COL) protein is UPF0316 protein SACOL1973.